The primary structure comprises 357 residues: Histidine biosynthesis bifunctional protein HisB (357 aa).

Residues 1–168 (MTPILFIDRD…GIAHALADAP (168 aa)) form a histidinol-phosphatase region. Catalysis depends on aspartate 8, which acts as the Nucleophile. Mg(2+) is bound by residues aspartate 8, aspartate 10, and aspartate 128. Aspartate 10 serves as the catalytic Proton donor. The interval 169 to 357 (RTAVVQRDTK…TALPSTKGAL (189 aa)) is imidazoleglycerol-phosphate dehydratase.

It in the N-terminal section; belongs to the histidinol-phosphatase family. The protein in the C-terminal section; belongs to the imidazoleglycerol-phosphate dehydratase family. Mg(2+) is required as a cofactor.

The protein resides in the cytoplasm. It catalyses the reaction D-erythro-1-(imidazol-4-yl)glycerol 3-phosphate = 3-(imidazol-4-yl)-2-oxopropyl phosphate + H2O. The enzyme catalyses L-histidinol phosphate + H2O = L-histidinol + phosphate. It functions in the pathway amino-acid biosynthesis; L-histidine biosynthesis; L-histidine from 5-phospho-alpha-D-ribose 1-diphosphate: step 6/9. Its pathway is amino-acid biosynthesis; L-histidine biosynthesis; L-histidine from 5-phospho-alpha-D-ribose 1-diphosphate: step 8/9. This Stenotrophomonas maltophilia (strain K279a) protein is Histidine biosynthesis bifunctional protein HisB.